The chain runs to 142 residues: Large ribosomal subunit protein uL11 (142 aa).

Belongs to the universal ribosomal protein uL11 family. As to quaternary structure, part of the ribosomal stalk of the 50S ribosomal subunit. Interacts with L10 and the large rRNA to form the base of the stalk. L10 forms an elongated spine to which L12 dimers bind in a sequential fashion forming a multimeric L10(L12)X complex. In terms of processing, one or more lysine residues are methylated.

Its function is as follows. Forms part of the ribosomal stalk which helps the ribosome interact with GTP-bound translation factors. This is Large ribosomal subunit protein uL11 from Glaesserella parasuis serovar 5 (strain SH0165) (Haemophilus parasuis).